The primary structure comprises 367 residues: Aspartate-semialdehyde dehydrogenase (367 aa).

NADP(+) is bound by residues 10–13 (RGMV), 37–38 (TS), and Gln-73. Phosphate is bound at residue Arg-102. The active-site Acyl-thioester intermediate is Cys-135. Cys-135 bears the S-cysteinyl cysteine; in inhibited form mark. Residue Gln-162 participates in substrate binding. NADP(+)-binding positions include 165-169 (SGGGA), Arg-173, and Pro-193. A substrate-binding site is contributed by Glu-241. Phosphate is bound at residue Lys-244. Arg-267 serves as a coordination point for substrate. Catalysis depends on His-274, which acts as the Proton acceptor. An NADP(+)-binding site is contributed by Gln-350.

It belongs to the aspartate-semialdehyde dehydrogenase family. Homodimer.

The catalysed reaction is L-aspartate 4-semialdehyde + phosphate + NADP(+) = 4-phospho-L-aspartate + NADPH + H(+). It participates in amino-acid biosynthesis; L-lysine biosynthesis via DAP pathway; (S)-tetrahydrodipicolinate from L-aspartate: step 2/4. It functions in the pathway amino-acid biosynthesis; L-methionine biosynthesis via de novo pathway; L-homoserine from L-aspartate: step 2/3. The protein operates within amino-acid biosynthesis; L-threonine biosynthesis; L-threonine from L-aspartate: step 2/5. Is inhibited by L- and D-cystine, and by other cystine derivatives, via the formation of a covalently bound cysteine at the active site Cys-135. Catalyzes the NADPH-dependent formation of L-aspartate-semialdehyde (L-ASA) by the reductive dephosphorylation of L-aspartyl-4-phosphate. This Escherichia coli (strain K12) protein is Aspartate-semialdehyde dehydrogenase.